The sequence spans 163 residues: Putative 4-hydroxy-4-methyl-2-oxoglutarate aldolase (163 aa).

Substrate contacts are provided by residues 76 to 79 (GDMI) and Arg98. Asp99 is a binding site for a divalent metal cation.

The protein belongs to the class II aldolase/RraA-like family. Homotrimer. Requires a divalent metal cation as cofactor.

It catalyses the reaction 4-hydroxy-4-methyl-2-oxoglutarate = 2 pyruvate. The catalysed reaction is oxaloacetate + H(+) = pyruvate + CO2. Catalyzes the aldol cleavage of 4-hydroxy-4-methyl-2-oxoglutarate (HMG) into 2 molecules of pyruvate. Also contains a secondary oxaloacetate (OAA) decarboxylase activity due to the common pyruvate enolate transition state formed following C-C bond cleavage in the retro-aldol and decarboxylation reactions. The chain is Putative 4-hydroxy-4-methyl-2-oxoglutarate aldolase from Pseudomonas fluorescens (strain Pf0-1).